The primary structure comprises 276 residues: Cerberus (276 aa).

The first 20 residues, 1–20 (MLLCVLKIYIIFCLVNDGAG), serve as a signal peptide directing secretion. N-linked (GlcNAc...) asparagine glycans are attached at residues Asn103, Asn118, and Asn160. Cystine bridges form between Cys175/Cys221, Cys189/Cys235, Cys199/Cys251, and Cys203/Cys253. One can recognise a CTCK domain in the interval 175-259 (CKTLPFTQNI…ECACEAHKNN (85 aa)). N-linked (GlcNAc...) asparagine glycosylation occurs at Asn234.

This sequence belongs to the DAN family. The long chain interacts with nodal/nr-1, bmp4 and wnt8, thereby inhibiting their function. The short chain interacts with nodal/nr-1 but not bmp4 or wnt8. As to expression, expressed in the anterior endomesoderm of the early gastrula with expression expanded laterally around the margin at the endoderm/mesoderm boundary.

It is found in the secreted. Inhibits wnt, nodal/nr-1 and bmp signaling in the embryo to promote head formation and anterior neural induction. Within the endoderm, acts as an essential mediator of nodal/nr-1-induced cardiogenesis in the overlying mesoderm. This is Cerberus from Xenopus tropicalis (Western clawed frog).